Consider the following 398-residue polypeptide: Succinate--CoA ligase [ADP-forming] subunit beta (398 aa).

The 246-residue stretch at 9 to 254 folds into the ATP-grasp domain; that stretch reads KALLHEFGVP…ETEEDAKEIE (246 aa). ATP contacts are provided by residues Lys46, 53–55, Glu109, Ser112, and Glu117; that span reads GRG. Mg(2+) contacts are provided by Asn209 and Asp223. Residues Asn274 and 331-333 contribute to the substrate site; that span reads GIM.

It belongs to the succinate/malate CoA ligase beta subunit family. Heterotetramer of two alpha and two beta subunits. It depends on Mg(2+) as a cofactor.

It catalyses the reaction succinate + ATP + CoA = succinyl-CoA + ADP + phosphate. The catalysed reaction is GTP + succinate + CoA = succinyl-CoA + GDP + phosphate. It participates in carbohydrate metabolism; tricarboxylic acid cycle; succinate from succinyl-CoA (ligase route): step 1/1. Its function is as follows. Succinyl-CoA synthetase functions in the citric acid cycle (TCA), coupling the hydrolysis of succinyl-CoA to the synthesis of either ATP or GTP and thus represents the only step of substrate-level phosphorylation in the TCA. The beta subunit provides nucleotide specificity of the enzyme and binds the substrate succinate, while the binding sites for coenzyme A and phosphate are found in the alpha subunit. This Bradyrhizobium sp. (strain ORS 278) protein is Succinate--CoA ligase [ADP-forming] subunit beta.